The sequence spans 1336 residues: Coiled-coil and C2 domain-containing protein 2A (1336 aa).

Disordered regions lie at residues 1-29 (MEAA…EQEV) and 70-97 (VEDC…QTFI). The segment covering 8-23 (KTAKKKRKTHTTRGYR) has biased composition (basic residues). Acidic residues predominate over residues 70–89 (VEDCQESDEDSGGELAEEPT). Residues 136-156 (LSDLSELKDSQIRMLNRYQEQ) are a coiled coil. The C2 domain occupies 755–915 (PREPSGWSGH…LASRTFEGCI (161 aa)).

Probable component of the tectonic-like complex (also named MKS complex), composed of B9d1, B9d2, Cc2d2a, Mks1 and tctn. Expressed in the antennae of chordotonal neurons and male germ cells (at protein level).

The protein resides in the cytoplasm. It is found in the cytoskeleton. It localises to the cilium basal body. The protein localises to the microtubule organizing center. Its subcellular location is the centrosome. The protein resides in the centriole. In terms of biological role, probable component of the tectonic-like complex (also named MKS complex), a complex localized at the transition zone of primary cilia. Required for ciliary structure and function. This is Coiled-coil and C2 domain-containing protein 2A from Drosophila melanogaster (Fruit fly).